Here is a 614-residue protein sequence, read N- to C-terminus: Subtilin transport ATP-binding protein SpaT (614 aa).

A run of 5 helical transmembrane segments spans residues 34–54 (FLKL…SLYI), 69–89 (VSIV…SELI), 147–167 (IIQA…SIAF), 175–195 (VSLL…KIGQ), and 267–287 (IAVQ…AFAG). The ABC transmembrane type-1 domain occupies 34–320 (FLKLIRFSII…IMTSIYSIYN (287 aa)). The region spanning 353-593 (VVFQNVSFIY…CPLYKKMDES (241 aa)) is the ABC transporter domain. Residue 387-394 (GPNGSGKK) coordinates ATP.

Belongs to the ABC transporter superfamily.

Its subcellular location is the cell membrane. Probably implicated in the export process of the lantibiotic subtilin. This chain is Subtilin transport ATP-binding protein SpaT (spaT), found in Bacillus subtilis.